Here is a 420-residue protein sequence, read N- to C-terminus: Beta-arrestin-2 (420 aa).

Phosphotyrosine is present on tyrosine 48. Hydroxyproline; by PHD2 occurs at positions 176 and 181. The interval 240 to 409 is interaction with TRAF6; it reads ADICLFSTAQ…EDFARLRLKG (170 aa). Serine 360 is modified (phosphoserine). Positions 374–420 are interaction with AP2B1; the sequence is PETDAPVDTNLIEFETNYATDDDIVFEDFARLRLKGLKDEDYDDQFC. Threonine 393 is modified (phosphothreonine). The [DE]-X(1,2)-F-X-X-[FL]-X-X-X-R motif motif lies at 396–406; that stretch reads DIVFEDFARLR.

It belongs to the arrestin family. In terms of assembly, homooligomer; the self-association is mediated by InsP6-binding. Heterooligomer with ARRB1; the association is mediated by InsP6-binding. Interacts with ADRB2 and CHRM2. Interacts with PDE4A. Interacts with PDE4D. Interacts with MAPK10, MAPK1 and MAPK3. Interacts with DRD2. Interacts with FSHR. Interacts with CLTC. Interacts with HTR2C. Interacts with CRR5. Interacts with CXCR4. Interacts with SRC. Interacts with DUSP16; the interaction is interrupted by stimulation of AGTR1 and activation of MAPK10. Interacts with CHUK; the interaction is enhanced stimulation of ADRB2. Interacts with RELA. Interacts with MDM2; the interaction is enhanced by activation of GPCRs. Interacts with SLC9A5. Interacts with TRAF6. Interacts with IGF1R. Interacts with ENG. Interacts with KIR2DL1, KIR2DL3 and KIR2DL4. Interacts with LDLR. Interacts with AP2B1. Interacts with C5AR1. Interacts with RAF1. Interacts with MAP2K1. Interacts with MAPK1. Interacts with MAPK10; the interaction enhances MAPK10 activation by MAP3K5. Interacts with MAP2K4; the interaction is enhanced by presence of MAP3K5 and MAPK10. Interacts with MAP3K5. Interacts with AKT1. Interacts with IKBKB and MAP3K14. Interacts with SMO (activated). Interacts with GSK3A and GSK3B. Associates with protein phosphatase 2A (PP2A). Interacts with CXCR4; the interaction is dependent on C-terminal phosphorylation of CXCR4 and allows activation of MAPK1 and MAPK3. Interacts with GPR143. Interacts with HCK and CXCR1 (phosphorylated). Interacts with ACKR3 and ACKR4. Interacts with ARRDC1; the interaction is direct. Interacts with GPR61, GPR62 and GPR135. Interacts (via NACHT and LRR domains) with NLRP3; this interaction is direct and inducible by omega-3 polyunsaturated fatty acids (PUFAs). Interacts with FFAR4 (via C-terminus); this interaction is stimulated by long-chain fatty acids (LCFAs). Interacts with GPR35. Interacts with GPR84. Interacts with TIGIT; this interaction inhibits the NF-kappa-B pathway. Interacts with TGFBR3. Phosphorylated at Thr-382 in the cytoplasm; probably dephosphorylated at the plasma membrane. The phosphorylation does not regulate internalization and recycling of ADRB2, interaction with clathrin or AP2B1. Post-translationally, the ubiquitination status appears to regulate the formation and trafficking of beta-arrestin-GPCR complexes and signaling. Ubiquitination appears to occur GPCR-specific. Ubiquitinated by MDM2; the ubiquitination is required for rapid internalization of ADRB2. Deubiquitinated by USP33; the deubiquitination leads to a dissociation of the beta-arrestin-GPCR complex. Stimulation of a class A GPCR, such as ADRB2, induces transient ubiquitination and subsequently promotes association with USP33. Stimulation of a class B GPCR promotes a sustained ubiquitination. Deubiquitinated by USP20; allowing USP20 to deubiquitinate TRAF6 leading to inhibition of NF-kappa-B signaling. In terms of processing, hydroxylation by PHD2 modulates the rate of internalization by slowing down recruitment to the plasma membrane and inhibiting subsequent co-internalization with class A receptors. Found in a variety of tissues. The short isoform is the most abundant form in all tissues.

It localises to the cytoplasm. Its subcellular location is the nucleus. The protein localises to the cell membrane. The protein resides in the membrane. It is found in the clathrin-coated pit. It localises to the cytoplasmic vesicle. Its function is as follows. Functions in regulating agonist-mediated G-protein coupled receptor (GPCR) signaling by mediating both receptor desensitization and resensitization processes. During homologous desensitization, beta-arrestins bind to the GPRK-phosphorylated receptor and sterically preclude its coupling to the cognate G-protein; the binding appears to require additional receptor determinants exposed only in the active receptor conformation. The beta-arrestins target many receptors for internalization by acting as endocytic adapters (CLASPs, clathrin-associated sorting proteins) and recruiting the GPRCs to the adapter protein 2 complex 2 (AP-2) in clathrin-coated pits (CCPs). However, the extent of beta-arrestin involvement appears to vary significantly depending on the receptor, agonist and cell type. Internalized arrestin-receptor complexes traffic to intracellular endosomes, where they remain uncoupled from G-proteins. Two different modes of arrestin-mediated internalization occur. Class A receptors, like ADRB2, OPRM1, ENDRA, D1AR and ADRA1B dissociate from beta-arrestin at or near the plasma membrane and undergo rapid recycling. Class B receptors, like AVPR2, AGTR1, NTSR1, TRHR and TACR1 internalize as a complex with arrestin and traffic with it to endosomal vesicles, presumably as desensitized receptors, for extended periods of time. Receptor resensitization then requires that receptor-bound arrestin is removed so that the receptor can be dephosphorylated and returned to the plasma membrane. Mediates endocytosis of CCR7 following ligation of CCL19 but not CCL21. Involved in internalization of P2RY1, P2RY4, P2RY6 and P2RY11 and ATP-stimulated internalization of P2RY2. Involved in phosphorylation-dependent internalization of OPRD1 and subsequent recycling or degradation. Involved in ubiquitination of IGF1R. Beta-arrestins function as multivalent adapter proteins that can switch the GPCR from a G-protein signaling mode that transmits short-lived signals from the plasma membrane via small molecule second messengers and ion channels to a beta-arrestin signaling mode that transmits a distinct set of signals that are initiated as the receptor internalizes and transits the intracellular compartment. Acts as a signaling scaffold for MAPK pathways such as MAPK1/3 (ERK1/2) and MAPK10 (JNK3). ERK1/2 and JNK3 activated by the beta-arrestin scaffold are largely excluded from the nucleus and confined to cytoplasmic locations such as endocytic vesicles, also called beta-arrestin signalosomes. Acts as a signaling scaffold for the AKT1 pathway. GPCRs for which the beta-arrestin-mediated signaling relies on both ARRB1 and ARRB2 (codependent regulation) include ADRB2, F2RL1 and PTH1R. For some GPCRs the beta-arrestin-mediated signaling relies on either ARRB1 or ARRB2 and is inhibited by the other respective beta-arrestin form (reciprocal regulation). Increases ERK1/2 signaling in AGTR1- and AVPR2-mediated activation (reciprocal regulation). Involved in CCR7-mediated ERK1/2 signaling involving ligand CCL19. Is involved in type-1A angiotensin II receptor/AGTR1-mediated ERK activity. Is involved in type-1A angiotensin II receptor/AGTR1-mediated MAPK10 activity. Is involved in dopamine-stimulated AKT1 activity in the striatum by disrupting the association of AKT1 with its negative regulator PP2A. Involved in AGTR1-mediated chemotaxis. Appears to function as signaling scaffold involved in regulation of MIP-1-beta-stimulated CCR5-dependent chemotaxis. Involved in attenuation of NF-kappa-B-dependent transcription in response to GPCR or cytokine stimulation by interacting with and stabilizing CHUK. Suppresses UV-induced NF-kappa-B-dependent activation by interacting with CHUK. The function is promoted by stimulation of ADRB2 and dephosphorylation of ARRB2. Involved in p53/TP53-mediated apoptosis by regulating MDM2 and reducing the MDM2-mediated degradation of p53/TP53. May serve as nuclear messenger for GPCRs. Upon stimulation of OR1D2, may be involved in regulation of gene expression during the early processes of fertilization. Also involved in regulation of receptors other than GPCRs. Involved in endocytosis of TGFBR2 and TGFBR3 and down-regulates TGF-beta signaling such as NF-kappa-B activation. Involved in endocytosis of low-density lipoprotein receptor/LDLR. Involved in endocytosis of smoothened homolog/Smo, which also requires GRK2. Involved in endocytosis of SLC9A5. Involved in endocytosis of ENG and subsequent TGF-beta-mediated ERK activation and migration of epithelial cells. Involved in Toll-like receptor and IL-1 receptor signaling through the interaction with TRAF6 which prevents TRAF6 autoubiquitination and oligomerization required for activation of NF-kappa-B and JUN. Involved in insulin resistance by acting as insulin-induced signaling scaffold for SRC, AKT1 and INSR. Involved in regulation of inhibitory signaling of natural killer cells by recruiting PTPN6 and PTPN11 to KIR2DL1. Involved in IL8-mediated granule release in neutrophils. Involved in the internalization of the atypical chemokine receptor ACKR3. Acts as an adapter protein coupling FFAR4 receptor to specific downstream signaling pathways, as well as mediating receptor endocytosis. During the activation step of NLRP3 inflammasome, directly associates with NLRP3 leading to inhibition of pro-inflammatory cytokine release and inhibition of inflammation. This chain is Beta-arrestin-2 (ARRB2), found in Bos taurus (Bovine).